The primary structure comprises 183 residues: Translation initiation factor IF-3 (183 aa).

This sequence belongs to the IF-3 family. Monomer.

The protein localises to the cytoplasm. In terms of biological role, IF-3 binds to the 30S ribosomal subunit and shifts the equilibrium between 70S ribosomes and their 50S and 30S subunits in favor of the free subunits, thus enhancing the availability of 30S subunits on which protein synthesis initiation begins. The sequence is that of Translation initiation factor IF-3 from Pseudomonas aeruginosa (strain ATCC 15692 / DSM 22644 / CIP 104116 / JCM 14847 / LMG 12228 / 1C / PRS 101 / PAO1).